Here is a 345-residue protein sequence, read N- to C-terminus: Protoheme IX farnesyltransferase (345 aa).

A run of 9 helical transmembrane segments spans residues 33-53 (VMSL…TPIH), 54-74 (PLLG…SGAL), 105-125 (ATLG…AINW), 126-146 (LAAG…TMWL), 154-174 (IVIG…AATG), 182-202 (LMVL…SLYI), 226-246 (QILL…FTGL), 247-267 (GGWL…TLAV), and 315-335 (ILYL…GLPI).

Belongs to the UbiA prenyltransferase family. Protoheme IX farnesyltransferase subfamily.

Its subcellular location is the cell inner membrane. It carries out the reaction heme b + (2E,6E)-farnesyl diphosphate + H2O = Fe(II)-heme o + diphosphate. The protein operates within porphyrin-containing compound metabolism; heme O biosynthesis; heme O from protoheme: step 1/1. In terms of biological role, converts heme B (protoheme IX) to heme O by substitution of the vinyl group on carbon 2 of heme B porphyrin ring with a hydroxyethyl farnesyl side group. The sequence is that of Protoheme IX farnesyltransferase from Caulobacter sp. (strain K31).